The primary structure comprises 194 residues: MKVVDTEFVISAVSEKQYPKDDLPEFALAGRSNVGKSSLINTIVNRRKLARTSQQPGKTQTLNFYKVNNELYLVDVPGYGYAKVSKKQRAAFGEMIQDYLETRADLKGLILLVDARHDPTADDINMFNYALYLDIPILVVATKMDKLKKMEASQIKQKIGKSLDLKQENVSFLPFSSVSKLNVDKFWDWIEDKM.

Positions 22 to 194 (DLPEFALAGR…KFWDWIEDKM (173 aa)) constitute an EngB-type G domain. Residues 30 to 37 (GRSNVGKS), 57 to 61 (GKTQT), 75 to 78 (DVPG), 142 to 145 (TKMD), and 175 to 177 (FSS) each bind GTP. Mg(2+)-binding residues include Ser-37 and Thr-59.

This sequence belongs to the TRAFAC class TrmE-Era-EngA-EngB-Septin-like GTPase superfamily. EngB GTPase family. Mg(2+) serves as cofactor.

Functionally, necessary for normal cell division and for the maintenance of normal septation. The polypeptide is Probable GTP-binding protein EngB (Lactobacillus gasseri (strain ATCC 33323 / DSM 20243 / BCRC 14619 / CIP 102991 / JCM 1131 / KCTC 3163 / NCIMB 11718 / NCTC 13722 / AM63)).